The following is a 336-amino-acid chain: HTH-type transcriptional regulator AscG (336 aa).

The HTH lacI-type domain occupies 2 to 56 (TTMLEVAKRAGVSKATVSRVLSGNGYVSQETKDRVFQAVEESGYRPNLLARNLSA). Residues 4-23 (MLEVAKRAGVSKATVSRVLS) constitute a DNA-binding region (H-T-H motif).

In terms of biological role, repressor of the asc operon. The cryptic operon is activated by the insertion of IS186 into the ascG gene. This Escherichia coli (strain K12) protein is HTH-type transcriptional regulator AscG (ascG).